Reading from the N-terminus, the 594-residue chain is Transcriptional repressor p66-beta (594 aa).

Ser17 carries the phosphoserine modification. Residues Lys33 and Lys66 each participate in a glycyl lysine isopeptide (Lys-Gly) (interchain with G-Cter in SUMO2) cross-link. Positions 62–143 (ELPTKQDGSG…ASSPRSSSRM (82 aa)) are disordered. Over residues 74 to 89 (GYEEKLNGNLRPHGDN) the composition is skewed to basic and acidic residues. Residue Lys98 forms a Glycyl lysine isopeptide (Lys-Gly) (interchain with G-Cter in SUMO2) linkage. Over residues 109–119 (SARRSEPDRGR) the composition is skewed to basic and acidic residues. Residue Thr121 is modified to Phosphothreonine. Phosphoserine is present on residues Ser123, Ser130, Ser135, and Ser136. The span at 130–140 (SDNEASSPRSS) shows a compositional bias: low complexity. Residues 141–195 (SRMEERLKAANLEMFKGKGMEERQQLIKQLRDELRLEEARLVLLKKLRQSQLQKE) adopt a coiled-coil conformation. Lys148 participates in a covalent cross-link: Glycyl lysine isopeptide (Lys-Gly) (interchain with G-Cter in SUMO2). The segment at 166–191 (LIKQLRDELRLEEARLVLLKKLRQSQ) is CR1; interaction with MBD2 and MBD3. A Glycyl lysine isopeptide (Lys-Gly) (interchain with G-Cter in SUMO2) cross-link involves residue Lys200. Ser209 carries the phosphoserine modification. A disordered region spans residues 214–237 (SPAHVGQQGLSKLPSRPGAQGIEP). Residue Lys282 forms a Glycyl lysine isopeptide (Lys-Gly) (interchain with G-Cter in SUMO2) linkage. A phosphoserine mark is found at Ser334, Ser339, and Ser341. Residues 341-481 (SAMSDAANSQ…QEQEIEQRLQ (141 aa)) are CR2; histone tail-binding. Glycyl lysine isopeptide (Lys-Gly) (interchain with G-Cter in SUMO2) cross-links involve residues Lys354, Lys455, and Lys468. The GATA-type zinc finger occupies 415-468 (RVEPFVCAQCRTDFTPHWKQEKNGKILCEQCMTSNQKKALKAEHTNRLKNAFVK). The stretch at 450-483 (QKKALKAEHTNRLKNAFVKALQQEQEIEQRLQQQ) forms a coiled coil. Position 487 is a phosphoserine (Ser487). Residue Lys499 forms a Glycyl lysine isopeptide (Lys-Gly) (interchain with G-Cter in SUMO2) linkage.

Homooligomer. Component of the nucleosome remodeling and deacetylase (NuRD) repressor complex, composed of core proteins MTA1, MTA2, MTA3, RBBP4, RBBP7, HDAC1, HDAC2, MBD2, MBD3, and peripherally associated proteins CDK2AP1, CDK2AP2, GATAD2A, GATAD2B, CHD3, CHD4 and CHD5. The exact stoichiometry of the NuRD complex is unknown, and some subunits such as MBD2 and MBD3, GATAD2A and GATAD2B, and CHD3, CHD4 and CHD5 define mutually exclusive NuRD complexes. Interacts with MBD2; this is required for the enhancement of MBD2-mediated repression and for targeting to the chromatin. Interacts with MBD3. Component of the MeCP1 histone deacetylase complex. Interacts with histone tails, including that of histones H2A, H2B, H3 and H4. Interacts with ERCC6.

Its subcellular location is the nucleus speckle. It localises to the nucleus. It is found in the chromosome. Transcriptional repressor. Acts as a component of the histone deacetylase NuRD complex which participates in the remodeling of chromatin. Enhances MBD2-mediated repression. Efficient repression requires the presence of GATAD2A. Targets MBD3 to discrete loci in the nucleus. May play a role in synapse development. The sequence is that of Transcriptional repressor p66-beta (Gatad2b) from Mus musculus (Mouse).